A 498-amino-acid chain; its full sequence is ATP synthase subunit beta, chloroplastic (498 aa).

Position 172-179 (172-179 (GGAGVGKT)) interacts with ATP.

The protein belongs to the ATPase alpha/beta chains family. F-type ATPases have 2 components, CF(1) - the catalytic core - and CF(0) - the membrane proton channel. CF(1) has five subunits: alpha(3), beta(3), gamma(1), delta(1), epsilon(1). CF(0) has four main subunits: a(1), b(1), b'(1) and c(9-12).

The protein localises to the plastid. The protein resides in the chloroplast thylakoid membrane. It carries out the reaction ATP + H2O + 4 H(+)(in) = ADP + phosphate + 5 H(+)(out). In terms of biological role, produces ATP from ADP in the presence of a proton gradient across the membrane. The catalytic sites are hosted primarily by the beta subunits. This chain is ATP synthase subunit beta, chloroplastic, found in Phaseolus vulgaris (Kidney bean).